The sequence spans 525 residues: MGVLSDVADFGKDVIDDRDKWADRFKKVGHFIERNAKGDRLERVAKFGRALGDFSGKFTDFFESNLGKRMVKAARSPILAAGQHVITGMKLTTGVGDPENGRRFGEGADHMSAAGRTLDSAYPTSDWDSAASDAYLSQNNGQVTRAEALVHADQVVAAVLSREAEQIATTREVLDSEADWLGDMSLVTMATGLIPYVGRAAQTAAEIAMVTKAVGASTDQFMMMRDKADENAAEVRDAIGKYEAVAGDADDTTADDTAGDAPESEPTAAEDSSETSKEDGQSRHENPVAAPSGGGGGATSGGGGGAPSSASSAGPAGTPQVPSPPGFGAANTPTDAQPGAAAASDAAGMLGSVMGAMLGPLGGIVGGVVQAAGQALQAATQAGAQAAQLAGQAAAAPDVDRADTDEDTDKDPDAEGDKDSDKRDGEGKEDGTAPRDRESTDAMGADDDDRNAHPQAGSGTDSAGEDDKKPAMTLPPDLQAASALDTGAGSAPVHVGADFEHSQLRTVAAATLDHGIPGSAAARGA.

Disordered stretches follow at residues 244-341 (AVAG…PGAA) and 375-494 (ALQA…APVH). Acidic residues predominate over residues 248 to 258 (DADDTTADDTA). Residues 274–286 (ETSKEDGQSRHEN) show a composition bias toward basic and acidic residues. Over residues 292–306 (SGGGGGATSGGGGGA) the composition is skewed to gly residues. 3 stretches are compositionally biased toward low complexity: residues 307 to 319 (PSSA…AGTP), 332 to 341 (TPTDAQPGAA), and 375 to 397 (ALQA…AAAP). Basic and acidic residues predominate over residues 411 to 440 (DPDAEGDKDSDKRDGEGKEDGTAPRDREST).

Its subcellular location is the cytoplasm. In Mycolicibacterium smegmatis (strain ATCC 700084 / mc(2)155) (Mycobacterium smegmatis), this protein is ESX-1 secretion-associated protein EspE.